Reading from the N-terminus, the 37-residue chain is Large ribosomal subunit protein bL36 (37 aa).

It belongs to the bacterial ribosomal protein bL36 family.

This Solidesulfovibrio magneticus (strain ATCC 700980 / DSM 13731 / RS-1) (Desulfovibrio magneticus) protein is Large ribosomal subunit protein bL36.